The chain runs to 276 residues: 5'-nucleotidase SurE (276 aa).

A divalent metal cation-binding residues include Asp14, Asp15, Ser46, and Asn104.

The protein belongs to the SurE nucleotidase family. The cofactor is a divalent metal cation.

The protein resides in the cytoplasm. It catalyses the reaction a ribonucleoside 5'-phosphate + H2O = a ribonucleoside + phosphate. Its function is as follows. Nucleotidase that shows phosphatase activity on nucleoside 5'-monophosphates. The chain is 5'-nucleotidase SurE from Crocosphaera subtropica (strain ATCC 51142 / BH68) (Cyanothece sp. (strain ATCC 51142)).